The primary structure comprises 53 residues: uncharacterized protein (53 aa).

The protein localises to the mitochondrion matrix. It localises to the kinetoplast. This is an uncharacterized protein from Trypanosoma brucei brucei.